A 236-amino-acid polypeptide reads, in one-letter code: Small ribosomal subunit protein uS2c (236 aa).

It belongs to the universal ribosomal protein uS2 family.

It localises to the plastid. The protein resides in the chloroplast. The chain is Small ribosomal subunit protein uS2c (rps2) from Phalaenopsis aphrodite subsp. formosana (Moth orchid).